The following is a 131-amino-acid chain: Ribosome-binding factor A (131 aa).

The protein belongs to the RbfA family. In terms of assembly, monomer. Binds 30S ribosomal subunits, but not 50S ribosomal subunits or 70S ribosomes.

The protein resides in the cytoplasm. In terms of biological role, one of several proteins that assist in the late maturation steps of the functional core of the 30S ribosomal subunit. Associates with free 30S ribosomal subunits (but not with 30S subunits that are part of 70S ribosomes or polysomes). Required for efficient processing of 16S rRNA. May interact with the 5'-terminal helix region of 16S rRNA. The chain is Ribosome-binding factor A from Picosynechococcus sp. (strain ATCC 27264 / PCC 7002 / PR-6) (Agmenellum quadruplicatum).